A 148-amino-acid chain; its full sequence is Arginine repressor (148 aa).

This sequence belongs to the ArgR family.

The protein localises to the cytoplasm. Its pathway is amino-acid biosynthesis; L-arginine biosynthesis [regulation]. Regulates arginine biosynthesis genes. In Streptococcus pneumoniae serotype 4 (strain ATCC BAA-334 / TIGR4), this protein is Arginine repressor (argR).